The chain runs to 262 residues: Flap endonuclease Xni (262 aa).

Residue D112 participates in Mg(2+) binding. In terms of domain architecture, 5'-3' exonuclease spans 171 to 258 (QQLNDYWAIT…GFNLKDLRYT (88 aa)). Residues I179, V190, and I193 each contribute to the K(+) site. The segment at 192–197 (GIGSKG) is interaction with DNA.

This sequence belongs to the Xni family. Mg(2+) serves as cofactor. Requires K(+) as cofactor.

Has flap endonuclease activity. During DNA replication, flap endonucleases cleave the 5'-overhanging flap structure that is generated by displacement synthesis when DNA polymerase encounters the 5'-end of a downstream Okazaki fragment. In Psychromonas ingrahamii (strain DSM 17664 / CCUG 51855 / 37), this protein is Flap endonuclease Xni.